We begin with the raw amino-acid sequence, 613 residues long: Alkyldihydroxyacetonephosphate synthase (613 aa).

Positions 126-307 constitute an FAD-binding PCMH-type domain; it reads IDRPPDAVIL…TEAVVKIERL (182 aa). FAD contacts are provided by residues 158–164, 228–234, 241–244, and 291–297; these read PFGGGTN, DSYAYST, ARGS, and EGAFGLV. Substrate is bound at residue arginine 437. The active-site Proton donor/acceptor is tyrosine 498. The interval 534 to 536 is important for enzyme activity; it reads HHH. The disordered stretch occupies residues 572 to 593; it reads NPGKLLPSPPSEKETPKATQAR. Positions 611-613 match the Microbody targeting signal motif; that stretch reads AHL.

The protein belongs to the FAD-binding oxidoreductase/transferase type 4 family. As to quaternary structure, homodimer. FAD serves as cofactor.

Its subcellular location is the peroxisome. The enzyme catalyses a long chain fatty alcohol + a 1-acylglycerone 3-phosphate = a 1-O-alkylglycerone 3-phosphate + a long-chain fatty acid + H(+). Its pathway is glycerolipid metabolism; ether lipid biosynthesis. Its function is as follows. Catalyzes the exchange of an acyl for a long-chain alkyl group and the formation of the ether bond in the biosynthesis of ether phospholipids. In Trypanosoma brucei brucei, this protein is Alkyldihydroxyacetonephosphate synthase.